A 241-amino-acid chain; its full sequence is Adenosylcobinamide-GDP ribazoletransferase (241 aa).

5 consecutive transmembrane segments (helical) span residues 24–44 (IVFFFTITGAITGLMAASIFY), 48–68 (FINQLLASVASVSFLIIIYGF), 103–123 (VVTFFIIYIITISLLSSFNSI), 175–195 (VIILIFLIFYKYIIFTMFSLI), and 218–238 (IIGFTGELSRLISLLLILISF).

Belongs to the CobS family. Mg(2+) is required as a cofactor.

The protein resides in the cell membrane. The enzyme catalyses alpha-ribazole + adenosylcob(III)inamide-GDP = adenosylcob(III)alamin + GMP + H(+). It carries out the reaction alpha-ribazole 5'-phosphate + adenosylcob(III)inamide-GDP = adenosylcob(III)alamin 5'-phosphate + GMP + H(+). It functions in the pathway cofactor biosynthesis; adenosylcobalamin biosynthesis; adenosylcobalamin from cob(II)yrinate a,c-diamide: step 7/7. In terms of biological role, joins adenosylcobinamide-GDP and alpha-ribazole to generate adenosylcobalamin (Ado-cobalamin). Also synthesizes adenosylcobalamin 5'-phosphate from adenosylcobinamide-GDP and alpha-ribazole 5'-phosphate. This Picrophilus torridus (strain ATCC 700027 / DSM 9790 / JCM 10055 / NBRC 100828 / KAW 2/3) protein is Adenosylcobinamide-GDP ribazoletransferase.